The sequence spans 883 residues: Valine--tRNA ligase (883 aa).

The short motif at 52 to 62 (PNVTGRLHLGH) is the 'HIGH' region element. The 'KMSKS' region signature appears at 529-533 (KMSKS). K532 is a binding site for ATP. Residues 813–848 (LEGLIDFDKEIKRLENELAKWTKEVERVQKKLSNQG) adopt a coiled-coil conformation.

The protein belongs to the class-I aminoacyl-tRNA synthetase family. ValS type 1 subfamily. As to quaternary structure, monomer.

It localises to the cytoplasm. The catalysed reaction is tRNA(Val) + L-valine + ATP = L-valyl-tRNA(Val) + AMP + diphosphate. In terms of biological role, catalyzes the attachment of valine to tRNA(Val). As ValRS can inadvertently accommodate and process structurally similar amino acids such as threonine, to avoid such errors, it has a 'posttransfer' editing activity that hydrolyzes mischarged Thr-tRNA(Val) in a tRNA-dependent manner. The polypeptide is Valine--tRNA ligase (Oceanobacillus iheyensis (strain DSM 14371 / CIP 107618 / JCM 11309 / KCTC 3954 / HTE831)).